A 450-amino-acid chain; its full sequence is Glucose-6-phosphate isomerase (450 aa).

Glu290 acts as the Proton donor in catalysis. Catalysis depends on residues His311 and Lys425.

This sequence belongs to the GPI family.

The protein localises to the cytoplasm. The enzyme catalyses alpha-D-glucose 6-phosphate = beta-D-fructose 6-phosphate. It participates in carbohydrate biosynthesis; gluconeogenesis. The protein operates within carbohydrate degradation; glycolysis; D-glyceraldehyde 3-phosphate and glycerone phosphate from D-glucose: step 2/4. Functionally, catalyzes the reversible isomerization of glucose-6-phosphate to fructose-6-phosphate. This chain is Glucose-6-phosphate isomerase, found in Limosilactobacillus fermentum (Lactobacillus fermentum).